Reading from the N-terminus, the 235-residue chain is MERLTRWLLVMMAMLLAASGLVWFYNSNHLPVKQVSLKGNLVYSDKKTLGSLAKEYIHGNILRTDINGAQEAYRRYPWIASVMVRRRFPDTVEVVLTERKPVARWGDHALVDGEGNVFEARLDRPGMPVFRGAEGTSAEMLRRYDEFSTVLAKQGLGIKEMTYTARSAWIVVLDNGITVRLGRENEMKRLRLFTEAWQHLLRKNKNRLSYVDMRYKDGFSVRYASDGLPEKESEE.

The Cytoplasmic segment spans residues 1–6; sequence MERLTR. Residues 7 to 25 form a helical membrane-spanning segment; that stretch reads WLLVMMAMLLAASGLVWFY. The Periplasmic segment spans residues 26 to 235; that stretch reads NSNHLPVKQV…DGLPEKESEE (210 aa). Positions 30-99 constitute a POTRA domain; it reads LPVKQVSLKG…DTVEVVLTER (70 aa).

This sequence belongs to the FtsQ/DivIB family. FtsQ subfamily. Part of a complex composed of FtsB, FtsL and FtsQ.

It is found in the cell inner membrane. Its function is as follows. Essential cell division protein. May link together the upstream cell division proteins, which are predominantly cytoplasmic, with the downstream cell division proteins, which are predominantly periplasmic. May control correct divisome assembly. The protein is Cell division protein FtsQ of Neisseria meningitidis serogroup B (strain ATCC BAA-335 / MC58).